Reading from the N-terminus, the 132-residue chain is Agouti-signaling protein (132 aa).

Positions 1-22 (MDVTRLLLATLLVFLCFFTANS) are cleaved as a signal peptide. An N-linked (GlcNAc...) asparagine glycan is attached at asparagine 39. Residues 62–85 (IGRKAAEKKRSSKKEASMKKVVRP) form a disordered region. Residues 65–79 (KAAEKKRSSKKEASM) show a composition bias toward basic and acidic residues. 5 cysteine pairs are disulfide-bonded: cysteine 93-cysteine 108, cysteine 100-cysteine 114, cysteine 107-cysteine 125, cysteine 111-cysteine 132, and cysteine 116-cysteine 123. The region spanning 93-132 (CVATRNSCKPPAPACCDPCASCQCRFFRSACSCRVLSLNC) is the Agouti domain.

Widely expressed at low levels. Highly expressed in the skin. Expressed in adipose tissue.

It is found in the secreted. Involved in the regulation of melanogenesis. The binding of ASP to MC1R precludes alpha-MSH initiated signaling and thus blocks production of cAMP, leading to a down-regulation of eumelanogenesis (brown/black pigment) and thus increasing synthesis of pheomelanin (yellow/red pigment). In higher primates, agouti may affect the quality of hair pigmentation rather than its pattern of deposition. Could well play a role in neuroendocrine aspects of melanocortin action. May have some functional role in regulating the lipid metabolism with adipocytes. The chain is Agouti-signaling protein (ASIP) from Homo sapiens (Human).